The sequence spans 539 residues: Cytochrome P450 monooxygenase tenB (539 aa).

A helical transmembrane segment spans residues Leu-13–Trp-33. Residues Pro-439 to Ala-460 are disordered. Cys-481 is a binding site for heme.

This sequence belongs to the cytochrome P450 family. The cofactor is heme.

It is found in the membrane. The protein operates within secondary metabolite biosynthesis. Functionally, cytochrome P450 monooxygenase; part of the gene cluster that mediates the biosynthesis of tenellin-type 2-pyridones, iron-chelating compounds involved in iron stress tolerance, competition with the natural competitor fungus Metarhizium robertsii and insect hosts infection. TenB catalyzes the selective N-hydroxylation of the 2-pyridone nitrogen of yield tellinin and 15-hydroxytellenin (15-HT), respectively. The pathway begins with the assembly of the polyketide-amino acid backbone by the hybrid PKS-NRPS tenS with the help of the enoyl reductase tenC. These enzymes catalyze the synthesis of the pyrrolidine-2-dione intermediates pretellinin A, 11-hydropretellenin A, 12-hydropretellenin A, 13-hydropretellenin A, 14-hydropretellenin A, 12-oxopretellenin A and prototellinin D. The cytochrome P450 monooxygenase tenA then catalyzes an oxidative ring expansion of pretenellin A and 14-hydropretellenin A to form the 2-pyridone core, leading to pretenellin B and pyridovericin, respectively. The cytochrome P450 monooxygenase tenB is then required for the selective N-hydroxylation of the 2-pyridone nitrogen of yield tellinin and 15-hydroxytellenin (15-HT), respectively. The UDP-glucosyltransferase GT1 and the methyltransferase MT1, located outside the tenS gene cluster, contribute to the stepwise glycosylation and methylation of 15-HT to obtain the glycoside pyridovericin-N-O-(4-O-methyl-beta-D-glucopyranoside) (PMGP). Additional related compounds such as 1-O-methyl-15-HT, (8Z)-1-O-methyl-15-HT, and O-methyltenellin A are also produced but the enzymes involved in their biosynthesis have still to be determined. This is Cytochrome P450 monooxygenase tenB from Beauveria bassiana (White muscardine disease fungus).